The sequence spans 264 residues: 3-methyl-2-oxobutanoate hydroxymethyltransferase (264 aa).

2 residues coordinate Mg(2+): aspartate 44 and aspartate 83. Residues 44 to 45, aspartate 83, and lysine 111 each bind 3-methyl-2-oxobutanoate; that span reads DS. Glutamate 113 is a Mg(2+) binding site. The Proton acceptor role is filled by glutamate 180.

Belongs to the PanB family. In terms of assembly, homodecamer; pentamer of dimers. The cofactor is Mg(2+).

Its subcellular location is the cytoplasm. The catalysed reaction is 3-methyl-2-oxobutanoate + (6R)-5,10-methylene-5,6,7,8-tetrahydrofolate + H2O = 2-dehydropantoate + (6S)-5,6,7,8-tetrahydrofolate. The protein operates within cofactor biosynthesis; (R)-pantothenate biosynthesis; (R)-pantoate from 3-methyl-2-oxobutanoate: step 1/2. Its function is as follows. Catalyzes the reversible reaction in which hydroxymethyl group from 5,10-methylenetetrahydrofolate is transferred onto alpha-ketoisovalerate to form ketopantoate. This Marinobacter nauticus (strain ATCC 700491 / DSM 11845 / VT8) (Marinobacter aquaeolei) protein is 3-methyl-2-oxobutanoate hydroxymethyltransferase.